The sequence spans 126 residues: Protein ApaG (126 aa).

Positions 2 to 126 (DVSQPRIQIQ…FRLAVPNILN (125 aa)) constitute an ApaG domain.

This Vibrio vulnificus (strain CMCP6) protein is Protein ApaG.